We begin with the raw amino-acid sequence, 437 residues long: Glutamyl-tRNA reductase (437 aa).

Substrate is bound by residues 46–49 (TCNR), Ser-111, 116–118 (ERE), and Gln-122. The active-site Nucleophile is the Cys-47. 192-197 (GTGAYA) lines the NADP(+) pocket. Residues 413-437 (PDVPEETAPSTRQDPSDTPRPRAVG) are disordered. Residues 426–437 (DPSDTPRPRAVG) are compositionally biased toward basic and acidic residues.

The protein belongs to the glutamyl-tRNA reductase family. As to quaternary structure, homodimer.

It carries out the reaction (S)-4-amino-5-oxopentanoate + tRNA(Glu) + NADP(+) = L-glutamyl-tRNA(Glu) + NADPH + H(+). The protein operates within porphyrin-containing compound metabolism; protoporphyrin-IX biosynthesis; 5-aminolevulinate from L-glutamyl-tRNA(Glu): step 1/2. Its function is as follows. Catalyzes the NADPH-dependent reduction of glutamyl-tRNA(Glu) to glutamate 1-semialdehyde (GSA). In Kocuria rhizophila (strain ATCC 9341 / DSM 348 / NBRC 103217 / DC2201), this protein is Glutamyl-tRNA reductase.